Here is a 59-residue protein sequence, read N- to C-terminus: UPF0434 protein Shew185_1670 (59 aa).

Belongs to the UPF0434 family.

The sequence is that of UPF0434 protein Shew185_1670 from Shewanella baltica (strain OS185).